Here is a 1161-residue protein sequence, read N- to C-terminus: Cingulin (1161 aa).

Positions 1–403 are head; the sequence is MSSLSADRKP…SLIHERFCGV (403 aa). Disordered regions lie at residues 29-53, 79-309, 649-678, 699-721, 739-773, and 1123-1161; these read GGFP…SPSK, SYGV…LGRD, QSEL…KRET, SKAI…ESNL, RLHS…AASR, and QSRR…TTSC. The short motif at 51-65 is the ZIM element; it reads PSKYGVAVRVQGISG. 2 stretches are compositionally biased toward polar residues: residues 84 to 104 and 117 to 129; these read LKTQ…SPYN and PQGS…QPSS. Residues 189–203 show a composition bias toward low complexity; that stretch reads NGIGSSLNGTGLNGS. Residues 273-305 show a composition bias toward polar residues; the sequence is EASSTSPTINPYAPNTSATVPKLNSTKPSSTGS. Residues 413–1128 are a coiled coil; that stretch reads SNMKTELEQA…RKIQQSRRST (716 aa). Over residues 742–751 the composition is skewed to low complexity; that stretch reads SSVPDSSSSD. The segment covering 755-773 has biased composition (basic and acidic residues); the sequence is EENRSLKTQLEESRRAASR. Positions 1122 to 1161 are tail; that stretch reads QQSRRSTLGSTLSSDEEDNYSDTKSITSILTDSPLQTTSC. Low complexity predominate over residues 1124 to 1134; the sequence is SRRSTLGSTLS. The span at 1143-1161 shows a compositional bias: polar residues; that stretch reads DTKSITSILTDSPLQTTSC.

It belongs to the cingulin family. Homodimer.

The protein localises to the cell junction. It is found in the tight junction. In terms of biological role, probably plays a role in the formation and regulation of the tight junction (TJ) paracellular permeability barrier. Note=Localizes to the apical junction complex composed of tight and adherens junctions. The sequence is that of Cingulin from Danio rerio (Zebrafish).